A 246-amino-acid chain; its full sequence is 4-hydroxy-tetrahydrodipicolinate reductase (246 aa).

Residue 9 to 14 (GNTGRM) coordinates NAD(+). NADP(+) is bound at residue Arg36. Residues 78–80 (GTT) and 104–107 (SPNM) contribute to the NAD(+) site. The Proton donor/acceptor role is filled by His137. His138 serves as a coordination point for (S)-2,3,4,5-tetrahydrodipicolinate. Lys141 serves as the catalytic Proton donor. 147-148 (GT) serves as a coordination point for (S)-2,3,4,5-tetrahydrodipicolinate.

Belongs to the DapB family.

Its subcellular location is the cytoplasm. The catalysed reaction is (S)-2,3,4,5-tetrahydrodipicolinate + NAD(+) + H2O = (2S,4S)-4-hydroxy-2,3,4,5-tetrahydrodipicolinate + NADH + H(+). The enzyme catalyses (S)-2,3,4,5-tetrahydrodipicolinate + NADP(+) + H2O = (2S,4S)-4-hydroxy-2,3,4,5-tetrahydrodipicolinate + NADPH + H(+). Its pathway is amino-acid biosynthesis; L-lysine biosynthesis via DAP pathway; (S)-tetrahydrodipicolinate from L-aspartate: step 4/4. Functionally, catalyzes the conversion of 4-hydroxy-tetrahydrodipicolinate (HTPA) to tetrahydrodipicolinate. In Chlamydia muridarum (strain MoPn / Nigg), this protein is 4-hydroxy-tetrahydrodipicolinate reductase.